A 56-amino-acid polypeptide reads, in one-letter code: Potassium channel toxin alpha-KTx 9.1 (56 aa).

Residues 1 to 28 (MSRLFTLVLIVLAMNVMMAIISDPVVEA) form the signal peptide. Intrachain disulfides connect Cys31-Cys47, Cys34-Cys52, and Cys38-Cys54.

As to expression, expressed by the venom gland.

The protein localises to the secreted. Its function is as follows. Blocks small conductance calcium-activated potassium channels (KCNN, SK). Weakly inhibits the Kv7.1/KCNQ1 channel (10 uM of the toxin inhibits currents by 23.3%). Low toxicity by intracerebroventricular injection into mice. In Olivierus martensii (Manchurian scorpion), this protein is Potassium channel toxin alpha-KTx 9.1.